The following is a 176-amino-acid chain: Transcription factor 21 (176 aa).

The segment at 1 to 84 (MSTGSISDVD…QVQRNAANAR (84 aa)) is disordered. Over residues 31–44 (GTSNESTEDSSNCE) the composition is skewed to polar residues. Residues 76–128 (VQRNAANARERARMRVLSKAFSRLKTTLPWVPPDTKLSKLDTLRLASSYIAHL) form the bHLH domain.

In terms of assembly, efficient DNA binding requires dimerization with another bHLH protein. Expressed in the cranial paraxial mesoderm from 20 hpf and subsequently becomes restricted to the pharyngeal mesoderm that will form the muscle. Expression in the proepicardial organ is first seen at 40hpf in a cluster of cells between the myocardium and yolk. Also expressed in the developing arches. Expression begins to surround the heart by day 3 of development, and by 96 hpf, expression is restricted to the outer epicardial layer surrounding the myocardium.

The protein resides in the nucleus. Functionally, involved in epithelial-mesenchymal interactions in kidney and lung morphogenesis that include epithelial differentiation and branching morphogenesis. This is Transcription factor 21 from Danio rerio (Zebrafish).